The chain runs to 378 residues: Chaperone protein DnaJ (378 aa).

Positions 5–72 (DFYEVLGVPK…QKRAAYDQFG (68 aa)) constitute a J domain. The CR-type zinc-finger motif lies at 138–216 (GKEAQIRIPS…CHGQGKVKKQ (79 aa)). Zn(2+) is bound by residues Cys-151, Cys-154, Cys-168, Cys-171, Cys-190, Cys-193, Cys-204, and Cys-207. CXXCXGXG motif repeat units follow at residues 151 to 158 (CETCHGSG), 168 to 175 (CTTCSGTG), 190 to 197 (CPHCRGTG), and 204 to 211 (CVTCHGQG). Residues 354–378 (SLKKGGGKHSPSGESWTDRLKNLFT) form a disordered region. Residues 369 to 378 (WTDRLKNLFT) are compositionally biased toward basic and acidic residues.

This sequence belongs to the DnaJ family. As to quaternary structure, homodimer. It depends on Zn(2+) as a cofactor.

The protein resides in the cytoplasm. Participates actively in the response to hyperosmotic and heat shock by preventing the aggregation of stress-denatured proteins and by disaggregating proteins, also in an autonomous, DnaK-independent fashion. Unfolded proteins bind initially to DnaJ; upon interaction with the DnaJ-bound protein, DnaK hydrolyzes its bound ATP, resulting in the formation of a stable complex. GrpE releases ADP from DnaK; ATP binding to DnaK triggers the release of the substrate protein, thus completing the reaction cycle. Several rounds of ATP-dependent interactions between DnaJ, DnaK and GrpE are required for fully efficient folding. Also involved, together with DnaK and GrpE, in the DNA replication of plasmids through activation of initiation proteins. This is Chaperone protein DnaJ from Paracidovorax citrulli (strain AAC00-1) (Acidovorax citrulli).